The sequence spans 339 residues: DNA-directed RNA polymerase subunit alpha (339 aa).

The interval 1–233 is alpha N-terminal domain (alpha-NTD); it reads MVREEVAGST…DLFLPFLHAE (233 aa). The segment at 264–339 is alpha C-terminal domain (alpha-CTD); the sequence is KKGIPLNCIF…IDLLKNKLSF (76 aa).

This sequence belongs to the RNA polymerase alpha chain family. In plastids the minimal PEP RNA polymerase catalytic core is composed of four subunits: alpha, beta, beta', and beta''. When a (nuclear-encoded) sigma factor is associated with the core the holoenzyme is formed, which can initiate transcription.

The protein localises to the plastid. The protein resides in the chloroplast. The enzyme catalyses RNA(n) + a ribonucleoside 5'-triphosphate = RNA(n+1) + diphosphate. Its function is as follows. DNA-dependent RNA polymerase catalyzes the transcription of DNA into RNA using the four ribonucleoside triphosphates as substrates. The protein is DNA-directed RNA polymerase subunit alpha of Thinopyrum elongatum (Tall wheatgrass).